Here is an 806-residue protein sequence, read N- to C-terminus: Enhancer of polycomb-like protein 1 (806 aa).

Disordered regions lie at residues 403-461 and 751-806; these read AITS…QEIG and SLQQ…NAAA. Positions 411-420 are enriched in basic residues; that stretch reads KRAKSSKSSK. Over residues 421–439 the composition is skewed to basic and acidic residues; the sequence is LHKEDSGLYADEKGSEPKK. The segment covering 751–779 has biased composition (low complexity); it reads SLQQQQMLQKGQQPINNAPHSQSSSPPSH. Residues 785–795 show a composition bias toward polar residues; the sequence is NPGSTPNQSSP.

This sequence belongs to the enhancer of polycomb family. As to quaternary structure, component of the NuA4 histone acetyltransferase complex.

The protein resides in the nucleus. Its function is as follows. Component of the NuA4 histone acetyltransferase complex which is involved in transcriptional activation of selected genes principally by acetylation of nucleosomal histone H4 and H2A. The NuA4 complex is also involved in DNA repair. Involved in gene silencing by neighboring heterochromatin, blockage of the silencing spreading along the chromosome, and required for cell cycle progression through G2/M. This Kluyveromyces lactis (strain ATCC 8585 / CBS 2359 / DSM 70799 / NBRC 1267 / NRRL Y-1140 / WM37) (Yeast) protein is Enhancer of polycomb-like protein 1 (EPL1).